Consider the following 317-residue polypeptide: MTRIVFMGTPDFSVPVLRTLIEDGYEVVGVVTQPDRPKGRKKVLTPPPVKEEALRHGIPVLQPEKVRLTEEIEKVLALKPDLIVTAAFGQILPKELLDSPKYGCINVHASLLPELRGGAPIHYSILQGKKKTGITIMYMVEKLDAGDMISKVEVDIEETDNVGTLHDKLSVAGAKLLSETVPNVIAGSISPEKQDEEKATYAPNIKREQELLDWSRTGEELYNQIRGLNPWPVAYTTLNGQNLKIWASKKIAAPTTAEPGTVVAVEKEGIIVATGNETALLLTELQPAGKKRMKGEDFVRGAHVEAGDVLGVNNEKN.

110–113 (SLLP) is a (6S)-5,6,7,8-tetrahydrofolate binding site.

Belongs to the Fmt family.

The catalysed reaction is L-methionyl-tRNA(fMet) + (6R)-10-formyltetrahydrofolate = N-formyl-L-methionyl-tRNA(fMet) + (6S)-5,6,7,8-tetrahydrofolate + H(+). Functionally, attaches a formyl group to the free amino group of methionyl-tRNA(fMet). The formyl group appears to play a dual role in the initiator identity of N-formylmethionyl-tRNA by promoting its recognition by IF2 and preventing the misappropriation of this tRNA by the elongation apparatus. The sequence is that of Methionyl-tRNA formyltransferase from Bacillus subtilis (strain 168).